A 1010-amino-acid polypeptide reads, in one-letter code: Protein translocase subunit SecA (1010 aa).

ATP contacts are provided by residues Gln86, 104-108 (GEGKT), and Asp535. The span at 893–904 (QAGAADGNAKGA) shows a compositional bias: low complexity. Residues 893–916 (QAGAADGNAKGARTVRHSVRLPGR) are disordered. Residues Cys920, Cys922, Cys931, and His932 each coordinate Zn(2+). Residues 950–981 (QHAAVAADTPAQPAPQATATRPPTSQVPRGRA) are compositionally biased toward low complexity. Residues 950 to 1010 (QHAAVAADTP…RGKGASARKK (61 aa)) form a disordered region.

This sequence belongs to the SecA family. In terms of assembly, monomer and homodimer. Part of the essential Sec protein translocation apparatus which comprises SecA, SecYEG and auxiliary proteins SecDF. Other proteins may also be involved. Zn(2+) is required as a cofactor.

It localises to the cell membrane. Its subcellular location is the cytoplasm. The enzyme catalyses ATP + H2O + cellular proteinSide 1 = ADP + phosphate + cellular proteinSide 2.. Part of the Sec protein translocase complex. Interacts with the SecYEG preprotein conducting channel. Has a central role in coupling the hydrolysis of ATP to the transfer of proteins into and across the cell membrane, serving as an ATP-driven molecular motor driving the stepwise translocation of polypeptide chains across the membrane. In Roseiflexus sp. (strain RS-1), this protein is Protein translocase subunit SecA.